We begin with the raw amino-acid sequence, 172 residues long: Ribosome maturation factor RimM (172 aa).

The PRC barrel domain maps to 96–168 (EGEFYYHQII…RVDVELMEGL (73 aa)).

Belongs to the RimM family. As to quaternary structure, binds ribosomal protein uS19.

The protein resides in the cytoplasm. Functionally, an accessory protein needed during the final step in the assembly of 30S ribosomal subunit, possibly for assembly of the head region. Essential for efficient processing of 16S rRNA. May be needed both before and after RbfA during the maturation of 16S rRNA. It has affinity for free ribosomal 30S subunits but not for 70S ribosomes. This Streptococcus pyogenes serotype M18 (strain MGAS8232) protein is Ribosome maturation factor RimM.